Here is a 430-residue protein sequence, read N- to C-terminus: Sorting nexin-30 (430 aa).

Positions 1-18 (MSNGGTPRSLPSSGQKSI) are enriched in polar residues. Residues 1–66 (MSNGGTPRSL…SSPASSSSLL (66 aa)) form a disordered region. A compositionally biased stretch (low complexity) spans 57–66 (SSPASSSSLL). The PX domain occupies 80-201 (RDLFVTVDDP…AFLSAKDLNK (122 aa)). The a 1,2-diacyl-sn-glycero-3-phospho-(1D-myo-inositol-3-phosphate) site is built by Arg123, Gln125, Lys153, and Arg167. One can recognise a BAR domain in the interval 223–428 (KLRGRPVEFA…LQDKQDAKGE (206 aa)).

This sequence belongs to the sorting nexin family.

The protein localises to the early endosome membrane. Its function is as follows. Involved in the regulation of endocytosis and in several stages of intracellular trafficking. Together with snx4, involved in autophagosome assembly. This chain is Sorting nexin-30 (snx30), found in Danio rerio (Zebrafish).